A 592-amino-acid polypeptide reads, in one-letter code: Elongation factor 1 alpha-like protein (592 aa).

Disordered stretches follow at residues 1–35 (MSRH…EEFR) and 78–159 (SSKA…KQNP). A compositionally biased stretch (acidic residues) spans 12–32 (LDDYELDEEPGEEELTEEQEE). The span at 82-111 (GAKEKQNTDSQKEKKQNKSKEALADAKDPL) shows a compositional bias: basic and acidic residues. The span at 113–124 (ESSNGIKNLSLN) shows a compositional bias: polar residues. Over residues 137–151 (VKMKNSSESDNQPEK) the composition is skewed to basic and acidic residues. Residues 175–401 (KPVVHLVVTG…DQLVPPEKPY (227 aa)) enclose the tr-type G domain. Positions 184 to 191 (GHVDSGKS) are G1. 184–191 (GHVDSGKS) lines the GTP pocket. Residues 240-244 (GVTMD) form a G2 region. Residues 261–264 (DAPG) are G3. GTP contacts are provided by residues 323–326 (NKLD) and 352–355 (FKTS). The tract at residues 323–326 (NKLD) is G4. Residues 363–365 (SAI) form a G5 region.

Belongs to the TRAFAC class translation factor GTPase superfamily. Classic translation factor GTPase family. In terms of assembly, component of the Dom34-Hbs1 complex, also named Pelota-HBS1L complex, composed of dom34 and hbs1.

Its subcellular location is the cytoplasm. It carries out the reaction GTP + H2O = GDP + phosphate + H(+). GTPase component of the Dom34-Hbs1 complex, a complex that recognizes stalled ribosomes and triggers the No-Go Decay (NGD) pathway. The Dom34-Hbs1 complex recognizes ribosomes stalled at the 3' end of an mRNA and engages stalled ribosomes by destabilizing mRNA in the mRNA channel. Following ribosome-binding, the Pelota-HBS1L complex promotes the disassembly of stalled ribosomes, followed by degradation of damaged mRNAs as part of the NGD pathway. The chain is Elongation factor 1 alpha-like protein from Schizosaccharomyces pombe (strain 972 / ATCC 24843) (Fission yeast).